A 515-amino-acid polypeptide reads, in one-letter code: 1-pyrroline-5-carboxylate dehydrogenase (515 aa).

Residues Glu-286 and Cys-320 contribute to the active site.

It belongs to the aldehyde dehydrogenase family. RocA subfamily.

It catalyses the reaction L-glutamate 5-semialdehyde + NAD(+) + H2O = L-glutamate + NADH + 2 H(+). It functions in the pathway amino-acid degradation; L-proline degradation into L-glutamate; L-glutamate from L-proline: step 2/2. The sequence is that of 1-pyrroline-5-carboxylate dehydrogenase from Bacillus cereus (strain B4264).